We begin with the raw amino-acid sequence, 309 residues long: Isethionate sulfite-lyase activating enzyme (309 aa).

Residues 22 to 309 (HDGPGIRTVV…VVAAEHATDG (288 aa)) enclose the Radical SAM core domain. Cys36, Cys40, Cys43, Cys62, Cys68, Cys71, Cys75, Cys95, Cys98, Cys102, and Cys106 together coordinate [4Fe-4S] cluster. An S-adenosyl-L-methionine-binding site is contributed by 42–44 (WCS). 2 consecutive 4Fe-4S ferredoxin-type domains span residues 53–85 (IELAYNTGRCLTLTKCVRCVEVCTMNAITRADD) and 86–117 (DTISIDRALCEECGMFCAEACPSKALITYGTT). S-adenosyl-L-methionine-binding positions include Gly146, 195–197 (DIK), and His268.

It belongs to the organic radical-activating enzymes family. In terms of assembly, monomer. [4Fe-4S] cluster is required as a cofactor.

The enzyme catalyses glycyl-[protein] + reduced [flavodoxin] + S-adenosyl-L-methionine = glycin-2-yl radical-[protein] + semiquinone [flavodoxin] + 5'-deoxyadenosine + L-methionine + H(+). It functions in the pathway organosulfur degradation; alkanesulfonate degradation. In terms of biological role, involved in an anaerobic respiration pathway that converts the sulfonate isethionate (2-hydroxyethanesulfonate) to ammonia, acetate and sulfide. Catalyzes activation of the isethionate sulfite-lyase IslA under anaerobic conditions by generation of an organic free radical on a glycine residue, via a homolytic cleavage of S-adenosyl-L-methionine (SAM). This Oleidesulfovibrio alaskensis (strain ATCC BAA-1058 / DSM 17464 / G20) (Desulfovibrio alaskensis) protein is Isethionate sulfite-lyase activating enzyme.